The following is a 792-amino-acid chain: Xaa-Pro dipeptidyl-peptidase (792 aa).

Active-site charge relay system residues include Ser-363, Asp-482, and His-513.

This sequence belongs to the peptidase S15 family. As to quaternary structure, homodimer.

Its subcellular location is the cytoplasm. It catalyses the reaction Hydrolyzes Xaa-Pro-|- bonds to release unblocked, N-terminal dipeptides from substrates including Ala-Pro-|-p-nitroanilide and (sequentially) Tyr-Pro-|-Phe-Pro-|-Gly-Pro-|-Ile.. In terms of biological role, removes N-terminal dipeptides sequentially from polypeptides having unsubstituted N-termini provided that the penultimate residue is proline. The sequence is that of Xaa-Pro dipeptidyl-peptidase (pepX) from Lactobacillus delbrueckii subsp. lactis.